The sequence spans 216 residues: Adenylate kinase (216 aa).

An ATP-binding site is contributed by 10-15; sequence GAGKGT. Positions 30 to 59 are NMP; that stretch reads STGDMLRAAVKAGTKLGQQVQGIMAAGKLV. AMP is bound by residues T31, R36, 57 to 59, 85 to 88, and Q92; these read KLV and GFPR. The LID stretch occupies residues 122–159; that stretch reads GRRVHMPSGRIYHLKFNPPKITDKDDMTGESLTLRKDD. Residues R123 and 132-133 contribute to the ATP site; that span reads IY. Positions 156 and 167 each coordinate AMP. R200 provides a ligand contact to ATP.

It belongs to the adenylate kinase family. Monomer.

The protein localises to the cytoplasm. It catalyses the reaction AMP + ATP = 2 ADP. Its pathway is purine metabolism; AMP biosynthesis via salvage pathway; AMP from ADP: step 1/1. Functionally, catalyzes the reversible transfer of the terminal phosphate group between ATP and AMP. Plays an important role in cellular energy homeostasis and in adenine nucleotide metabolism. The polypeptide is Adenylate kinase (Hamiltonella defensa subsp. Acyrthosiphon pisum (strain 5AT)).